The following is a 98-amino-acid chain: Small ribosomal subunit protein bS6 (98 aa).

It belongs to the bacterial ribosomal protein bS6 family.

Functionally, binds together with bS18 to 16S ribosomal RNA. The sequence is that of Small ribosomal subunit protein bS6 from Lactobacillus johnsonii (strain CNCM I-12250 / La1 / NCC 533).